The following is a 441-amino-acid chain: Protein translocase subunit SecY (441 aa).

The next 10 helical transmembrane spans lie at 24-44 (LFVL…VPGI), 77-97 (ILAL…LLAT), 123-143 (ATVV…PNML), 152-172 (FSFY…LMWL), 181-201 (IGNG…PSAI), 215-235 (PLVL…VVFV), 272-292 (VMPA…TQWF), 313-333 (PLYL…YTAM), 373-393 (LIGG…TSAW), and 397-417 (FYFG…FIVQ).

Belongs to the SecY/SEC61-alpha family. In terms of assembly, component of the Sec protein translocase complex. Heterotrimer consisting of SecY, SecE and SecG subunits. The heterotrimers can form oligomers, although 1 heterotrimer is thought to be able to translocate proteins. Interacts with the ribosome. Interacts with SecDF, and other proteins may be involved. Interacts with SecA.

Its subcellular location is the cell inner membrane. Its function is as follows. The central subunit of the protein translocation channel SecYEG. Consists of two halves formed by TMs 1-5 and 6-10. These two domains form a lateral gate at the front which open onto the bilayer between TMs 2 and 7, and are clamped together by SecE at the back. The channel is closed by both a pore ring composed of hydrophobic SecY resides and a short helix (helix 2A) on the extracellular side of the membrane which forms a plug. The plug probably moves laterally to allow the channel to open. The ring and the pore may move independently. In Haemophilus influenzae (strain ATCC 51907 / DSM 11121 / KW20 / Rd), this protein is Protein translocase subunit SecY.